The primary structure comprises 103 residues: Histone H4 (103 aa).

Positions 1 to 14 (MTGRGKGGKGLGKG) are enriched in gly residues. Positions 1–20 (MTGRGKGGKGLGKGGAKRHR) are disordered. An N6-acetyl-N6-methyllysine; alternate mark is found at K6 and K13. The DNA-binding element occupies 17 to 21 (KRHRK).

The protein belongs to the histone H4 family. As to quaternary structure, the nucleosome is a histone octamer containing two molecules each of H2A, H2B, H3 and H4 assembled in one H3-H4 heterotetramer and two H2A-H2B heterodimers. The octamer wraps approximately 147 bp of DNA.

It localises to the nucleus. It is found in the chromosome. Core component of nucleosome. Nucleosomes wrap and compact DNA into chromatin, limiting DNA accessibility to the cellular machineries which require DNA as a template. Histones thereby play a central role in transcription regulation, DNA repair, DNA replication and chromosomal stability. DNA accessibility is regulated via a complex set of post-translational modifications of histones, also called histone code, and nucleosome remodeling. In Diadromus pulchellus (Parasitic wasp), this protein is Histone H4.